The primary structure comprises 159 residues: Developmental pluripotency-associated protein 3 (159 aa).

Disordered regions lie at residues 1 to 31 (MDPSQFNPTYIPGSPQMLTEENSRDDSGASQ) and 140 to 159 (GWDPSENARIGNQDTKPLQP). Residues 149–159 (IGNQDTKPLQP) show a composition bias toward polar residues.

Low expression in testis, ovary and thymus. Expressed in embryonic stem and carcinoma cells. Highly expressed in testicular germ cell tumors.

The protein localises to the nucleus. It is found in the cytoplasm. Functionally, primordial germ cell (PGCs)-specific protein involved in epigenetic chromatin reprogramming in the zygote following fertilization. In zygotes, DNA demethylation occurs selectively in the paternal pronucleus before the first cell division, while the adjacent maternal pronucleus and certain paternally-imprinted loci are protected from this process. Participates in protection of DNA methylation in the maternal pronucleus by preventing conversion of 5mC to 5hmC: specifically recognizes and binds histone H3 dimethylated at 'Lys-9' (H3K9me2) on maternal genome, and protects maternal genome from TET3-mediated conversion to 5hmC and subsequent DNA demethylation. Does not bind paternal chromatin, which is mainly packed into protamine and does not contain much H3K9me2 mark. Also protects imprinted loci that are marked with H3K9me2 in mature sperm from DNA demethylation in early embryogenesis. May be important for the totipotent/pluripotent states continuing through preimplantation development. Also involved in chromatin condensation in oocytogenesis. The chain is Developmental pluripotency-associated protein 3 (DPPA3) from Homo sapiens (Human).